Reading from the N-terminus, the 735-residue chain is 2-5A-dependent ribonuclease (735 aa).

Positions 1-21 (METPDYNTPQGGTPSAGSQRT) are disordered. ANK repeat units follow at residues 24–53 (EDDS…DANA), 58–87 (WGWT…DPHR), 91–120 (NGAT…DVNE), 124–153 (NGFT…NVNL), 167–197 (GGAT…EVDA), 201–234 (MGRN…DVNV), 238–268 (RGKT…NIDA), 272–301 (EGKT…DKCD), and 303–328 (LVWI…NPDT). The tract at residues 26–51 (DSSLIKAVQKGDVVRVQQLLEKGADA) is binding to TMEV Leader protein. 2-5A binding (P-loop) stretches follow at residues 229 to 242 (GADV…GKTP) and 253 to 275 (GLVQ…EGKT). Residues 364–584 (IHDDYKIAGT…LVDLLGHPFF (221 aa)) enclose the Protein kinase domain. A C6-type zinc finger spans residues 401–436 (CKEVSCLRDCGDHSNLVAFYGREDDKGCLYVCVSLC). Residues 587–722 (WENRYRTLRN…KHFPQPPPRL (136 aa)) form the KEN domain. The tract at residues 714 to 735 (HFPQPPPRLSVPEAVGPGGIQS) is disordered.

Belongs to the protein kinase superfamily. (Microbial infection) Interacts (via N-terminus) with TMEV leader protein; this interaction prevents RNASEL activation by its substrate 2'-5' oligoadenylates. In terms of assembly, monomer (inactive form) or homodimer. Interacts with ABCE1; this interaction inhibits the RNASEL. Mn(2+) is required as a cofactor. It depends on Mg(2+) as a cofactor. Expressed in spleen, thymus, lung, testis, kidney, liver and heart.

The protein resides in the cytoplasm. It localises to the mitochondrion. With respect to regulation, after binding to 2-5A (5'-phosphorylated 2',5'-linked oligoadenylates) the homodimerization and subsequent activation occurs. Inhibited by RNASEL inhibitor ABCE1/RLI, a cytoplasmic member of the ATP-binding cassette (ABC) transporter family. Endoribonuclease that functions in the interferon (IFN) antiviral response. In INF treated and virus infected cells, RNASEL probably mediates its antiviral effects through a combination of direct cleavage of single-stranded viral RNAs, inhibition of protein synthesis through the degradation of rRNA, induction of apoptosis, and induction of other antiviral genes. RNASEL mediated apoptosis is the result of a JNK-dependent stress-response pathway leading to cytochrome c release from mitochondria and caspase-dependent apoptosis. Therefore, activation of RNASEL could lead to elimination of virus infected cells under some circumstances. In the crosstalk between autophagy and apoptosis proposed to induce autophagy as an early stress response to small double-stranded RNA and at later stages of prolonged stress to activate caspase-dependent proteolytic cleavage of BECN1 to terminate autophagy and promote apoptosis. Might play a central role in the regulation of mRNA turnover. Cleaves 3' of UpNp dimers, with preference for UU and UA sequences, to sets of discrete products ranging from between 4 and 22 nucleotides in length. The sequence is that of 2-5A-dependent ribonuclease (Rnasel) from Mus musculus (Mouse).